Consider the following 115-residue polypeptide: MMLDPQIAARLKRNADGLVTAVVQERGSRDVLMVAWMDDAALARTLETREATYYSRSRGQQWVKGETSGHTQYVHSVRLDCDGDTVLLTVDQVGGACHTGDHSCFDADVLLHPQD.

Residue Asp-80 participates in Mg(2+) binding. Zn(2+) is bound at residue Cys-81. Residues Asp-82 and Asp-84 each contribute to the Mg(2+) site. Zn(2+) is bound by residues Cys-97 and Cys-104.

This sequence belongs to the PRA-CH family. Homodimer. The cofactor is Mg(2+). It depends on Zn(2+) as a cofactor.

It is found in the cytoplasm. The catalysed reaction is 1-(5-phospho-beta-D-ribosyl)-5'-AMP + H2O = 1-(5-phospho-beta-D-ribosyl)-5-[(5-phospho-beta-D-ribosylamino)methylideneamino]imidazole-4-carboxamide. The protein operates within amino-acid biosynthesis; L-histidine biosynthesis; L-histidine from 5-phospho-alpha-D-ribose 1-diphosphate: step 3/9. Catalyzes the hydrolysis of the adenine ring of phosphoribosyl-AMP. This Mycobacterium avium (strain 104) protein is Phosphoribosyl-AMP cyclohydrolase.